Reading from the N-terminus, the 396-residue chain is NAD(P)H oxidoreductase RTN4IP1, mitochondrial (396 aa).

A mitochondrion-targeting transit peptide spans 1–40 (MGFLKTCVFRRNACTAVCFWRSQVVQKPSVRKISTTSPRS). One can recognise an Enoyl reductase (ER) domain in the interval 52 to 393 (GSNEVLRFTQ…RGHARGKTVI (342 aa)). Positions 214, 216, 217, 237, 255, 276, 300, 341, 343, 386, 387, and 388 each coordinate NADPH.

This sequence belongs to the zinc-containing alcohol dehydrogenase family. Quinone oxidoreductase subfamily. Interacts with RTN4, UQCRC1 and UQCRC2.

The protein localises to the mitochondrion matrix. It localises to the mitochondrion outer membrane. The enzyme catalyses a 3-demethylubiquinone + NADH + 2 H(+) = a 3-demethylubiquinol + NAD(+). It carries out the reaction a 3-demethylubiquinone + NADPH + 2 H(+) = a 3-demethylubiquinol + NADP(+). It catalyses the reaction 3-demethylubiquinone-10 + NADH + 2 H(+) = 3-demethylubiquinol-10 + NAD(+). The catalysed reaction is 3-demethylubiquinone-10 + NADPH + 2 H(+) = 3-demethylubiquinol-10 + NADP(+). It functions in the pathway cofactor biosynthesis; ubiquinone biosynthesis. NAD(P)H oxidoreductase involved in the ubiquinone biosynthetic pathway. Required for the O-methyltransferase activity of COQ3. Able to catalyze the oxidoreduction of 3-demethylubiquinone into 3-demethylubiquinol in vitro. However, it is unclear if 3-demethylubiquinone constitutes a substrate in vivo. May also play a role in the regulation of retinal ganglion cell (RGC) neurite outgrowth, and hence in the development of the inner retina and optic nerve. Appears to be a potent inhibitor of regeneration following spinal cord injury. In Bos taurus (Bovine), this protein is NAD(P)H oxidoreductase RTN4IP1, mitochondrial (RTN4IP1).